The sequence spans 327 residues: Ribosomal RNA large subunit methyltransferase F (327 aa).

This sequence belongs to the methyltransferase superfamily. METTL16/RlmF family.

Its subcellular location is the cytoplasm. The catalysed reaction is adenosine(1618) in 23S rRNA + S-adenosyl-L-methionine = N(6)-methyladenosine(1618) in 23S rRNA + S-adenosyl-L-homocysteine + H(+). Functionally, specifically methylates the adenine in position 1618 of 23S rRNA. The chain is Ribosomal RNA large subunit methyltransferase F from Marinomonas sp. (strain MWYL1).